The following is a 769-amino-acid chain: Ligand-dependent nuclear receptor-interacting factor 1 (769 aa).

Residues K259 and K279 each participate in a glycyl lysine isopeptide (Lys-Gly) (interchain with G-Cter in SUMO2) cross-link. Positions 378 to 387 (QIDQQNSVSP) are enriched in polar residues. The tract at residues 378-400 (QIDQQNSVSPDTPVRKDTLQTVS) is disordered. A phosphoserine mark is found at S402, S430, and S436. K446 is covalently cross-linked (Glycyl lysine isopeptide (Lys-Gly) (interchain with G-Cter in SUMO2)). S502 bears the Phosphoserine mark. The tract at residues 528-562 (DQEPKIHNEMASTSDKGAQGRNDKKDSQGRSNKAL) is disordered. Residues 580–584 (LRVCL) carry the PxVxL motif motif. S599 is subject to Phosphoserine. K605 participates in a covalent cross-link: Glycyl lysine isopeptide (Lys-Gly) (interchain with G-Cter in SUMO2). 2 consecutive short sequence motifs (nuclear localization signal) follow at residues 628–631 (KKRK) and 642–645 (KKRK). K702 participates in a covalent cross-link: Glycyl lysine isopeptide (Lys-Gly) (interchain with G-Cter in SUMO2). Position 732 is a phosphothreonine (T732). The stretch at 740 to 769 (IRDEKIRRLKQVLREKEAALEEMRKKMHQK) forms a coiled coil.

This sequence belongs to the LRIF1 family. Interacts with RARA. Interacts with SMCHD1; leading to recruitment to inactivated chromosome X in females. Interacts (via PxVxL motif) with HP1 (CBX1/HP1-beta, CBX3/HP1-gamma and CBX5/HP1-alpha). In terms of tissue distribution, widely expressed, with the highest expression levels in heart, liver and placenta.

It is found in the chromosome. It localises to the nucleus matrix. Together with SMCHD1, involved in chromosome X inactivation in females by promoting the compaction of heterochromatin. Also able to repress the ligand-induced transcriptional activity of retinoic acid receptor alpha (RARA), possibly through direct recruitment of histone deacetylases. Also required for silencing of the DUX4 locus in somatic cells. This is Ligand-dependent nuclear receptor-interacting factor 1 from Homo sapiens (Human).